A 111-amino-acid polypeptide reads, in one-letter code: Exocrine gland-secreted peptide 22 (111 aa).

An N-terminal signal peptide occupies residues 1–24 (MNSVPVMLFSISILLAAMLTEGRG).

Belongs to the exocrine gland-secreted peptide family. In terms of tissue distribution, expressed in acinar cells of the lacrimal gland from where it is secreted into tears. Not detected in a range of other tissues tested including other exocrine glands, internal organs and sensory epithelia.

It localises to the secreted. Pheromone produced by juveniles which activates a small number of vomeronasal organ sensory neurons and exhibits a powerful inhibitory effect on adult male mating behavior. In Mus musculus (Mouse), this protein is Exocrine gland-secreted peptide 22.